A 169-amino-acid polypeptide reads, in one-letter code: Putative pre-16S rRNA nuclease (169 aa).

Over residues 1-19 (MTDSDHRLPDRPGEGDPGR) the composition is skewed to basic and acidic residues. The disordered stretch occupies residues 1–22 (MTDSDHRLPDRPGEGDPGRGRR).

Belongs to the YqgF nuclease family.

The protein resides in the cytoplasm. Its function is as follows. Could be a nuclease involved in processing of the 5'-end of pre-16S rRNA. The polypeptide is Putative pre-16S rRNA nuclease (Mycobacterium sp. (strain JLS)).